A 316-amino-acid chain; its full sequence is tRNA uridine(34) hydroxylase (316 aa).

Positions A136–S230 constitute a Rhodanese domain. The active-site Cysteine persulfide intermediate is C190.

Belongs to the TrhO family.

It catalyses the reaction uridine(34) in tRNA + AH2 + O2 = 5-hydroxyuridine(34) in tRNA + A + H2O. Its function is as follows. Catalyzes oxygen-dependent 5-hydroxyuridine (ho5U) modification at position 34 in tRNAs. This Brucella abortus (strain 2308) protein is tRNA uridine(34) hydroxylase.